Reading from the N-terminus, the 309-residue chain is UDP-N-acetylenolpyruvoylglucosamine reductase (309 aa).

Residues 34–221 (RVGGPAQVLF…TAAREAAQPI (188 aa)) form the FAD-binding PCMH-type domain. R179 is a catalytic residue. S228 acts as the Proton donor in catalysis. The active site involves E298.

This sequence belongs to the MurB family. It depends on FAD as a cofactor.

It localises to the cytoplasm. It catalyses the reaction UDP-N-acetyl-alpha-D-muramate + NADP(+) = UDP-N-acetyl-3-O-(1-carboxyvinyl)-alpha-D-glucosamine + NADPH + H(+). The protein operates within cell wall biogenesis; peptidoglycan biosynthesis. Cell wall formation. In Methylorubrum extorquens (strain PA1) (Methylobacterium extorquens), this protein is UDP-N-acetylenolpyruvoylglucosamine reductase.